Here is a 634-residue protein sequence, read N- to C-terminus: DNA-directed RNA polymerase subunit gamma (634 aa).

Cys-74, Cys-76, Cys-89, and Cys-92 together coordinate Zn(2+). Residues Asp-471, Asp-473, and Asp-475 each contribute to the Mg(2+) site.

Belongs to the RNA polymerase beta' chain family. RpoC1 subfamily. In cyanobacteria the RNAP catalytic core is composed of 2 alpha, 1 beta, 1 beta', 1 gamma and 1 omega subunit. When a sigma factor is associated with the core the holoenzyme is formed, which can initiate transcription. The cofactor is Mg(2+). Requires Zn(2+) as cofactor.

The enzyme catalyses RNA(n) + a ribonucleoside 5'-triphosphate = RNA(n+1) + diphosphate. Functionally, DNA-dependent RNA polymerase catalyzes the transcription of DNA into RNA using the four ribonucleoside triphosphates as substrates. The polypeptide is DNA-directed RNA polymerase subunit gamma (Synechococcus sp. (strain RCC307)).